Here is a 297-residue protein sequence, read N- to C-terminus: Syntaxin-4 (297 aa).

Over residues 1–12 (MRDRTHELRQGD) the composition is skewed to basic and acidic residues. The disordered stretch occupies residues 1–21 (MRDRTHELRQGDDSSDEEDKE). At 1–275 (MRDRTHELRQ…QKKARKKKVL (275 aa)) the chain is on the cytoplasmic side. Phosphoserine occurs at positions 14 and 15. T31 is subject to Phosphothreonine. 4 positions are modified to phosphoserine: S36, S117, S208, and S248. Residues 43–163 (HKVRTIRQTI…ERIRRQLKIT (121 aa)) adopt a coiled-coil conformation. The interaction with CENPF stretch occupies residues 154–297 (ERIRRQLKIT…AVIIGVTVVG (144 aa)). Positions 200–262 (LNEISARHSE…ERGQEHVKTA (63 aa)) constitute a t-SNARE coiled-coil homology domain. A helical; Anchor for type IV membrane protein membrane pass occupies residues 276–296 (IAICVSITVVLLAVIIGVTVV). A topological domain (extracellular) is located at residue G297.

The protein belongs to the syntaxin family. As to quaternary structure, component of the SNARE complex composed of STX4, SNAP23 and VAMP7 that interacts with SYT7 during lysosomal exocytosis. Found in a complex with VAMP8 and SNAP23. Detected in a complex with SNAP23 and STXBP4. Interacts with VAMP2. Interacts with SNAP23 and SNAPIN. Interacts with LLGL1. Interacts (via C-terminus) with CENPF. Interacts with DOC2B. Interacts with STXBP6. Interacts with STXBP3; excludes interaction with DOC2B and SNAP25. Interacts with STXBP4; excludes interaction with VAMP2. Interacts with STXBP5L. Expressed in neutrophils and neutrophil-differentiated HL-60 cells. Expression in neutrophils increases with differentiation.

Its subcellular location is the cell membrane. The protein resides in the cell projection. It localises to the neuron projection. It is found in the stereocilium. In terms of biological role, plasma membrane t-SNARE that mediates docking of transport vesicles. Necessary for the translocation of SLC2A4 from intracellular vesicles to the plasma membrane. In neurons, recruited at neurite tips to membrane domains rich in the phospholipid 1-oleoyl-2-palmitoyl-PC (OPPC) which promotes neurite tip surface expression of the dopamine transporter SLC6A3/DAT by facilitating fusion of SLC6A3-containing transport vesicles with the plasma membrane. Together with STXB3 and VAMP2, may also play a role in docking/fusion of intracellular GLUT4-containing vesicles with the cell surface in adipocytes and in docking of synaptic vesicles at presynaptic active zones. Required for normal hearing. The sequence is that of Syntaxin-4 (STX4) from Homo sapiens (Human).